A 551-amino-acid chain; its full sequence is Protein ROOT HAIR SPECIFIC 17 (551 aa).

Residues 39-59 (LFPLVSAVSGCLLLILFSFST) traverse the membrane as a helical; Signal-anchor for type II membrane protein segment. N-linked (GlcNAc...) asparagine glycans are attached at residues Asn109 and Asn153. 293–295 (HLR) provides a ligand contact to substrate. 2 N-linked (GlcNAc...) asparagine glycosylation sites follow: Asn405 and Asn465. Residues 515–539 (KAKHVNEDDSSEYSEIGNVPISSRS) are disordered.

Belongs to the glycosyltransferase GT106 family. As to expression, specifically expressed in the root hair.

The protein resides in the membrane. It participates in glycan metabolism. The sequence is that of Protein ROOT HAIR SPECIFIC 17 from Arabidopsis thaliana (Mouse-ear cress).